The chain runs to 416 residues: UDP-N-acetylglucosamine 1-carboxyvinyltransferase (416 aa).

22-23 (KN) contacts phosphoenolpyruvate. A UDP-N-acetyl-alpha-D-glucosamine-binding site is contributed by Arg92. Catalysis depends on Cys116, which acts as the Proton donor. The residue at position 116 (Cys116) is a 2-(S-cysteinyl)pyruvic acid O-phosphothioketal. The UDP-N-acetyl-alpha-D-glucosamine site is built by Asp304 and Ile326.

The protein belongs to the EPSP synthase family. MurA subfamily.

The protein resides in the cytoplasm. It catalyses the reaction phosphoenolpyruvate + UDP-N-acetyl-alpha-D-glucosamine = UDP-N-acetyl-3-O-(1-carboxyvinyl)-alpha-D-glucosamine + phosphate. It functions in the pathway cell wall biogenesis; peptidoglycan biosynthesis. Its function is as follows. Cell wall formation. Adds enolpyruvyl to UDP-N-acetylglucosamine. The chain is UDP-N-acetylglucosamine 1-carboxyvinyltransferase from Solidesulfovibrio magneticus (strain ATCC 700980 / DSM 13731 / RS-1) (Desulfovibrio magneticus).